The chain runs to 119 residues: Immunoglobulin lambda variable 4-69 (119 aa).

The signal sequence occupies residues 1–20; sequence MAWTPLLFLTLLLHCTGSLS. The interval 21-45 is framework-1; the sequence is QLVLTQSPSASASLGASVKLTCTLS. An Ig-like domain is found at 21–119; it reads QLVLTQSPSA…YYCQTWGTGI (99 aa). A disulfide bridge links cysteine 42 with cysteine 112. The tract at residues 46–52 is complementarity-determining-1; that stretch reads SGHSSYA. A framework-2 region spans residues 53 to 69; it reads IAWHQQQPEKGPRYLMK. The complementarity-determining-2 stretch occupies residues 70–76; that stretch reads LNSDGSH. Residues 73 to 92 form a disordered region; it reads DGSHSKGDGIPDRFSGSSSG. A framework-3 region spans residues 77–112; the sequence is SKGDGIPDRFSGSSSGAERYLTISSLQSEDEADYYC. A complementarity-determining-3 region spans residues 113 to 119; the sequence is QTWGTGI.

Immunoglobulins are composed of two identical heavy chains and two identical light chains; disulfide-linked.

Its subcellular location is the secreted. It is found in the cell membrane. In terms of biological role, v region of the variable domain of immunoglobulin light chains that participates in the antigen recognition. Immunoglobulins, also known as antibodies, are membrane-bound or secreted glycoproteins produced by B lymphocytes. In the recognition phase of humoral immunity, the membrane-bound immunoglobulins serve as receptors which, upon binding of a specific antigen, trigger the clonal expansion and differentiation of B lymphocytes into immunoglobulins-secreting plasma cells. Secreted immunoglobulins mediate the effector phase of humoral immunity, which results in the elimination of bound antigens. The antigen binding site is formed by the variable domain of one heavy chain, together with that of its associated light chain. Thus, each immunoglobulin has two antigen binding sites with remarkable affinity for a particular antigen. The variable domains are assembled by a process called V-(D)-J rearrangement and can then be subjected to somatic hypermutations which, after exposure to antigen and selection, allow affinity maturation for a particular antigen. This chain is Immunoglobulin lambda variable 4-69, found in Homo sapiens (Human).